Reading from the N-terminus, the 608-residue chain is Rap1 GTPase-GDP dissociation stimulator 1 (608 aa).

2 ARM repeats span residues 89 to 131 (GLIS…DQAG) and 171 to 212 (DSLQ…NLAE). The interval 122-171 (EGRSAVDQAGGAQIVVDHLRSLCSKTDPASEKLLTVFCGMLMNYSNEKND) is prevents binding to prenylated RHOA. K231 carries the N6-acetyllysine modification. ARM repeat units follow at residues 348 to 391 (DGNC…NLAI), 392 to 432 (PVVN…MLID), and 480 to 520 (SKDV…LIAA).

In terms of assembly, interacts with RABL3. Interacts with RHOT1. Interacts with unprenylated RHOA; the interaction is direct. Interacts with RAP1A. Interacts with KRAS. Interacts with RAC1. Interacts with RAP1B. Preferentially interacts with unprenylated GTPases that will become geranylgeranylated. May also interact with prenylated GTPases. As to quaternary structure, interacts with prenylated RHOA; the interaction is direct and in a 1:1 stoichiometry. Interacts with RAP1A. Interacts with KRAS. Interacts with RAC1. Interacts with RAP1B. Preferentially interacts with prenylated GTPases. The N-terminus is blocked. Post-translationally, forms covalent cross-links mediated by transglutaminase TGM2, between a glutamine and the epsilon-amino group of a lysine residue, forming homopolymers and heteropolymers. As to expression, brain.

It is found in the cytoplasm. It localises to the cytosol. The protein resides in the endoplasmic reticulum. Its subcellular location is the mitochondrion. The protein localises to the nucleus. Its function is as follows. Acts as a GEF (guanine nucleotide exchange factor) for the Rho family of small GTP-binding proteins (G proteins) that stimulates the dissociation of GDP to enable subsequent binding of GTP. Additionally, appears to chaperone the processing and/or trafficking of small GTPases containing a C-terminal polybasic region independently of GEF activity. Targets include RAP1A/RAP1B, RHOA, RHOB, RHOC, RAC1 and KRAS. Regulates mitochondrial dynamics by controlling RHOT function to promote mitochondrial fission during high calcium conditions. Able to promote the Ca(2+) release from the endoplasmic reticulum via both inositol trisphosphate (Ins3P) and ryanodine sensitive receptors leading to a enhanced mitochondrial Ca(2+) uptake. Functionally, acts as a GEF (guanine nucleotide exchange factor) for unprenylated RHOA. Chaperones the entry and passage of small GTPases through the prenylation pathway. Recognizes the last amino acid in the GTPase C-terminal CAAX motif with a preference for 'Leu' over 'Met', indicating involvement in the geranylgeranylation pathway. May also recognize prenylated GTPases. Acts as a GEF (guanine nucleotide exchange factor) for prenylated RHOA. Acts as a GEF for RHOC. Chaperones the downstream trafficking and/or processing of small newly prenylated GTPases. Escorts RAC1 to the nucleus. In Bos taurus (Bovine), this protein is Rap1 GTPase-GDP dissociation stimulator 1 (RAP1GDS1).